The sequence spans 193 residues: Probable GTP-binding protein EngB (193 aa).

An EngB-type G domain is found at 22-193 (QLPEFALAGR…EAWGALQKWM (172 aa)). GTP contacts are provided by residues 30–37 (GRSNVGKS), 57–61 (GKTQT), 75–78 (DVPG), 142–145 (TKAD), and 174–176 (FSA). Residues serine 37 and threonine 59 each contribute to the Mg(2+) site.

This sequence belongs to the TRAFAC class TrmE-Era-EngA-EngB-Septin-like GTPase superfamily. EngB GTPase family. Mg(2+) is required as a cofactor.

In terms of biological role, necessary for normal cell division and for the maintenance of normal septation. This is Probable GTP-binding protein EngB from Anoxybacillus flavithermus (strain DSM 21510 / WK1).